Here is a 306-residue protein sequence, read N- to C-terminus: tRNA dimethylallyltransferase (306 aa).

Position 9 to 16 (9 to 16) interacts with ATP; the sequence is GPTAIGKT. A substrate-binding site is contributed by 11-16; the sequence is TAIGKT. An interaction with substrate tRNA region spans residues 34–37; sequence DSMQ.

Belongs to the IPP transferase family. In terms of assembly, monomer. It depends on Mg(2+) as a cofactor.

It catalyses the reaction adenosine(37) in tRNA + dimethylallyl diphosphate = N(6)-dimethylallyladenosine(37) in tRNA + diphosphate. Functionally, catalyzes the transfer of a dimethylallyl group onto the adenine at position 37 in tRNAs that read codons beginning with uridine, leading to the formation of N6-(dimethylallyl)adenosine (i(6)A). In Lactobacillus helveticus (strain DPC 4571), this protein is tRNA dimethylallyltransferase.